A 434-amino-acid polypeptide reads, in one-letter code: ATP-dependent protease ATPase subunit HslU (434 aa).

ATP contacts are provided by residues Ile-18, 60–65 (GVGKTE), Asp-247, Glu-312, and Arg-384.

The protein belongs to the ClpX chaperone family. HslU subfamily. In terms of assembly, a double ring-shaped homohexamer of HslV is capped on each side by a ring-shaped HslU homohexamer. The assembly of the HslU/HslV complex is dependent on binding of ATP.

The protein localises to the cytoplasm. In terms of biological role, ATPase subunit of a proteasome-like degradation complex; this subunit has chaperone activity. The binding of ATP and its subsequent hydrolysis by HslU are essential for unfolding of protein substrates subsequently hydrolyzed by HslV. HslU recognizes the N-terminal part of its protein substrates and unfolds these before they are guided to HslV for hydrolysis. The protein is ATP-dependent protease ATPase subunit HslU of Brucella melitensis biotype 1 (strain ATCC 23456 / CCUG 17765 / NCTC 10094 / 16M).